The following is a 143-amino-acid chain: MIVQVINGPNLGRLGRREPDVYGDTTHDQLAALIEAEAAALGLKAIVRQSDSEAELLDWIHGAADANQPVILNAGGLTHTSVALRDACAELSAPLIEVHISNVHAREEFRRHSYLSPVATGVIVGLGVQGYLLALRYLAGRPA.

Y22 acts as the Proton acceptor in catalysis. The substrate site is built by N73, H79, and D86. H99 acts as the Proton donor in catalysis. Residues 100 to 101 (IS) and R110 contribute to the substrate site.

It belongs to the type-II 3-dehydroquinase family. Homododecamer.

It catalyses the reaction 3-dehydroquinate = 3-dehydroshikimate + H2O. The protein operates within metabolic intermediate biosynthesis; chorismate biosynthesis; chorismate from D-erythrose 4-phosphate and phosphoenolpyruvate: step 3/7. In terms of biological role, catalyzes a trans-dehydration via an enolate intermediate. The chain is 3-dehydroquinate dehydratase from Mycobacterium avium (strain 104).